Consider the following 167-residue polypeptide: Ribosome maturation factor RimM (167 aa).

Residues 94–165 enclose the PRC barrel domain; sequence EHEYYYSDII…TIKITPMEGL (72 aa).

The protein belongs to the RimM family. In terms of assembly, binds ribosomal protein uS19.

It is found in the cytoplasm. Functionally, an accessory protein needed during the final step in the assembly of 30S ribosomal subunit, possibly for assembly of the head region. Essential for efficient processing of 16S rRNA. May be needed both before and after RbfA during the maturation of 16S rRNA. It has affinity for free ribosomal 30S subunits but not for 70S ribosomes. The sequence is that of Ribosome maturation factor RimM from Staphylococcus epidermidis (strain ATCC 12228 / FDA PCI 1200).